The sequence spans 269 residues: Putative phosphatase M6_Spy0533 (269 aa).

Aspartate 9 acts as the Nucleophile in catalysis. Aspartate 9 lines the Mg(2+) pocket. Isoleucine 10 contacts phosphate. Position 11 (aspartate 11) interacts with Mg(2+). Residues 43–44 (TG) and lysine 196 contribute to the phosphate site. A Mg(2+)-binding site is contributed by aspartate 219. Residue asparagine 222 coordinates phosphate.

It depends on Mg(2+) as a cofactor.

In Streptococcus pyogenes serotype M6 (strain ATCC BAA-946 / MGAS10394), this protein is Putative phosphatase M6_Spy0533.